We begin with the raw amino-acid sequence, 250 residues long: Precorrin-4 C(11)-methyltransferase (250 aa).

The protein belongs to the precorrin methyltransferase family.

It catalyses the reaction precorrin-4 + S-adenosyl-L-methionine = precorrin-5 + S-adenosyl-L-homocysteine. Its pathway is cofactor biosynthesis; adenosylcobalamin biosynthesis; cob(II)yrinate a,c-diamide from precorrin-2 (aerobic route): step 4/10. Its function is as follows. Catalyzes the methylation of C-11 in precorrin-4 to form precorrin-5. The protein is Precorrin-4 C(11)-methyltransferase (cobM) of Pseudomonas aeruginosa (strain ATCC 15692 / DSM 22644 / CIP 104116 / JCM 14847 / LMG 12228 / 1C / PRS 101 / PAO1).